We begin with the raw amino-acid sequence, 40 residues long: MADTTGRIPLWIIGTVTGILVIGLVGIFFYGSYSGLGSSL.

A helical membrane pass occupies residues 8–28; that stretch reads IPLWIIGTVTGILVIGLVGIF.

Belongs to the PsbJ family. In terms of assembly, PSII is composed of 1 copy each of membrane proteins PsbA, PsbB, PsbC, PsbD, PsbE, PsbF, PsbH, PsbI, PsbJ, PsbK, PsbL, PsbM, PsbT, PsbX, PsbY, PsbZ, Psb30/Ycf12, at least 3 peripheral proteins of the oxygen-evolving complex and a large number of cofactors. It forms dimeric complexes.

The protein resides in the plastid. Its subcellular location is the chloroplast thylakoid membrane. Its function is as follows. One of the components of the core complex of photosystem II (PSII). PSII is a light-driven water:plastoquinone oxidoreductase that uses light energy to abstract electrons from H(2)O, generating O(2) and a proton gradient subsequently used for ATP formation. It consists of a core antenna complex that captures photons, and an electron transfer chain that converts photonic excitation into a charge separation. This Jasminum nudiflorum (Winter jasmine) protein is Photosystem II reaction center protein J.